The chain runs to 138 residues: ATP synthase epsilon chain (138 aa).

Belongs to the ATPase epsilon chain family. F-type ATPases have 2 components, CF(1) - the catalytic core - and CF(0) - the membrane proton channel. CF(1) has five subunits: alpha(3), beta(3), gamma(1), delta(1), epsilon(1). CF(0) has three main subunits: a, b and c.

The protein localises to the cell inner membrane. In terms of biological role, produces ATP from ADP in the presence of a proton gradient across the membrane. This is ATP synthase epsilon chain from Polynucleobacter necessarius subsp. necessarius (strain STIR1).